Consider the following 256-residue polypeptide: Thiazole synthase (256 aa).

The active-site Schiff-base intermediate with DXP is the Lys95. Residues Gly156, 182–183 (AG), and 204–205 (NT) contribute to the 1-deoxy-D-xylulose 5-phosphate site.

The protein belongs to the ThiG family. In terms of assembly, homotetramer. Forms heterodimers with either ThiH or ThiS.

The protein resides in the cytoplasm. The enzyme catalyses [ThiS sulfur-carrier protein]-C-terminal-Gly-aminoethanethioate + 2-iminoacetate + 1-deoxy-D-xylulose 5-phosphate = [ThiS sulfur-carrier protein]-C-terminal Gly-Gly + 2-[(2R,5Z)-2-carboxy-4-methylthiazol-5(2H)-ylidene]ethyl phosphate + 2 H2O + H(+). The protein operates within cofactor biosynthesis; thiamine diphosphate biosynthesis. In terms of biological role, catalyzes the rearrangement of 1-deoxy-D-xylulose 5-phosphate (DXP) to produce the thiazole phosphate moiety of thiamine. Sulfur is provided by the thiocarboxylate moiety of the carrier protein ThiS. In vitro, sulfur can be provided by H(2)S. This chain is Thiazole synthase, found in Escherichia fergusonii (strain ATCC 35469 / DSM 13698 / CCUG 18766 / IAM 14443 / JCM 21226 / LMG 7866 / NBRC 102419 / NCTC 12128 / CDC 0568-73).